Consider the following 388-residue polypeptide: Succinate--CoA ligase [ADP-forming] subunit beta (388 aa).

The region spanning 9 to 244 (KEILRKFGVA…LDEEDPAEIE (236 aa)) is the ATP-grasp domain. ATP contacts are provided by residues Lys46, 53–55 (GRG), Glu99, Ala102, and Glu107. The Mg(2+) site is built by Asn199 and Asp213. Residues Asn264 and 321–323 (GIM) contribute to the substrate site.

Belongs to the succinate/malate CoA ligase beta subunit family. As to quaternary structure, heterotetramer of two alpha and two beta subunits. Mg(2+) is required as a cofactor.

The enzyme catalyses succinate + ATP + CoA = succinyl-CoA + ADP + phosphate. The catalysed reaction is GTP + succinate + CoA = succinyl-CoA + GDP + phosphate. It participates in carbohydrate metabolism; tricarboxylic acid cycle; succinate from succinyl-CoA (ligase route): step 1/1. Functionally, succinyl-CoA synthetase functions in the citric acid cycle (TCA), coupling the hydrolysis of succinyl-CoA to the synthesis of either ATP or GTP and thus represents the only step of substrate-level phosphorylation in the TCA. The beta subunit provides nucleotide specificity of the enzyme and binds the substrate succinate, while the binding sites for coenzyme A and phosphate are found in the alpha subunit. This is Succinate--CoA ligase [ADP-forming] subunit beta from Burkholderia cenocepacia (strain HI2424).